The sequence spans 826 residues: Lethal(3)malignant brain tumor-like protein 1 (826 aa).

S136 bears the Phosphoserine mark. Disordered regions lie at residues 167 to 197 (LEPP…SGDR) and 220 to 271 (LLKP…RSQL). Residues 242–256 (EAVKQGEGKDAEREP) are compositionally biased toward basic and acidic residues. 3 MBT repeats span residues 280-380 (WSWE…LQLP), 388-487 (FSWS…LTPP), and 496-591 (FCWE…LEPP). Residues 453-460 (FDDWGDTY) form an interaction with monomethylated and dimethylated peptides region. The segment at 586–621 (HPLEPPLRPRESSSVSPGGCPPLSHRSPPHTKTSKY) is disordered. Residues 612–621 (SPPHTKTSKY) show a composition bias toward basic residues. Residues 619–662 (SKYNFHHRKCPTPGCDGSGHVTGKFTAHHCLSGCPLAEKNQSRL) form a CCHHC-type zinc finger. Residues C628, C633, H646, and C652 each contribute to the Zn(2+) site. The disordered stretch occupies residues 663-699 (KAELSDSETAARKKNPSNLSPRKKPRHQGRIGRPPKY). Basic residues predominate over residues 683–699 (PRKKPRHQGRIGRPPKY). Residues 757 to 821 (WTIEEVFGFV…YNAILMFKNT (65 aa)) form the SAM domain.

Homodimer. Interacts with RB1/RB (when monomethylated at 'Lys-860'). Interacts with p53/TP53 (when monomethylated at 'Lys-382'). Interacts with CBX3, ETV6, KMT5A and VCP/p97. Post-translationally, ubiquitinated in a VCP/p97-dependent way following DNA damage, leading to its removal from DNA damage sites, promoting accessibility of H4K20me2 mark for DNA repair protein TP53BP1, which is then recruited to DNA damage sites. In terms of tissue distribution, highly expressed in brain, testis, eyes, and ES cells.

Its subcellular location is the nucleus. Polycomb group (PcG) protein that specifically recognizes and binds mono- and dimethyllysine residues on target proteins, thereby acting as a 'reader' of a network of post-translational modifications. PcG proteins maintain the transcriptionally repressive state of genes: acts as a chromatin compaction factor by recognizing and binding mono- and dimethylated histone H1b/H1-4 at 'Lys-26' (H1bK26me1 and H1bK26me2) and histone H4 at 'Lys-20' (H4K20me1 and H4K20me2), leading to condense chromatin and repress transcription. Recognizes and binds p53/TP53 monomethylated at 'Lys-382', leading to repress p53/TP53-target genes. Also recognizes and binds RB1/RB monomethylated at 'Lys-860'. Participates in the ETV6-mediated repression. Probably plays a role in cell proliferation. Overexpression induces multinucleated cells, suggesting that it is required to accomplish normal mitosis. This is Lethal(3)malignant brain tumor-like protein 1 (L3mbtl1) from Mus musculus (Mouse).